The chain runs to 356 residues: UDP-N-acetylglucosamine--N-acetylmuramyl-(pentapeptide) pyrophosphoryl-undecaprenol N-acetylglucosamine transferase (356 aa).

UDP-N-acetyl-alpha-D-glucosamine is bound by residues 14-16 (TGG), N126, R162, S190, I244, and Q289.

This sequence belongs to the glycosyltransferase 28 family. MurG subfamily.

Its subcellular location is the cell inner membrane. It carries out the reaction di-trans,octa-cis-undecaprenyl diphospho-N-acetyl-alpha-D-muramoyl-L-alanyl-D-glutamyl-meso-2,6-diaminopimeloyl-D-alanyl-D-alanine + UDP-N-acetyl-alpha-D-glucosamine = di-trans,octa-cis-undecaprenyl diphospho-[N-acetyl-alpha-D-glucosaminyl-(1-&gt;4)]-N-acetyl-alpha-D-muramoyl-L-alanyl-D-glutamyl-meso-2,6-diaminopimeloyl-D-alanyl-D-alanine + UDP + H(+). It functions in the pathway cell wall biogenesis; peptidoglycan biosynthesis. Its function is as follows. Cell wall formation. Catalyzes the transfer of a GlcNAc subunit on undecaprenyl-pyrophosphoryl-MurNAc-pentapeptide (lipid intermediate I) to form undecaprenyl-pyrophosphoryl-MurNAc-(pentapeptide)GlcNAc (lipid intermediate II). The sequence is that of UDP-N-acetylglucosamine--N-acetylmuramyl-(pentapeptide) pyrophosphoryl-undecaprenol N-acetylglucosamine transferase from Cupriavidus pinatubonensis (strain JMP 134 / LMG 1197) (Cupriavidus necator (strain JMP 134)).